A 326-amino-acid chain; its full sequence is Transmembrane protein PVRIG (326 aa).

Transmembrane regions (helical) follow at residues 26–46 (LVLP…EVWV), 62–78 (CGFL…VSWG), and 172–192 (LAGI…LLHL). Tyr-233 bears the Phosphotyrosine mark. Residues 296–326 (AGERPPHTGPGLTLFPDPRGPRAMEGPLGVR) form a disordered region.

Interacts with NECTIN2, hence competing with CD226. As to expression, expressed in some types of immune cells. Expressed at low levels on the surface of freshly isolated T-cells and natural killer (NK) cells, predominantly on CD8+ T-cells (mainly memory/effector, but not naive cells) and on both CD16+ and CD16- NK cells. T-cell expression levels are variable among individuals. Not detected in B-cells, naive or helper T-cells, monocytes, nor neutrophils (at protein level). Not detected in dendritic cells.

The protein localises to the cell membrane. Functionally, cell surface receptor for NECTIN2. May act as a coinhibitory receptor that suppresses T-cell receptor-mediated signals. Following interaction with NECTIN2, inhibits T-cell proliferation. Competes with CD226 for NECTIN2-binding. The polypeptide is Transmembrane protein PVRIG (PVRIG) (Homo sapiens (Human)).